Here is a 204-residue protein sequence, read N- to C-terminus: Recombination protein RecR (204 aa).

The C4-type zinc finger occupies 63–78 (CRICFNVADSELCPIC). The 96-residue stretch at 86–181 (NKICVVEQPQ…KVTRLARGLP (96 aa)) folds into the Toprim domain.

This sequence belongs to the RecR family.

Functionally, may play a role in DNA repair. It seems to be involved in an RecBC-independent recombinational process of DNA repair. It may act with RecF and RecO. The sequence is that of Recombination protein RecR from Dehalococcoides mccartyi (strain ATCC BAA-2266 / KCTC 15142 / 195) (Dehalococcoides ethenogenes (strain 195)).